Consider the following 278-residue polypeptide: Probable ribosomal RNA small subunit methyltransferase A (278 aa).

6 residues coordinate S-adenosyl-L-methionine: Asn23, Leu25, Gly50, Glu71, Asp95, and Asn110.

Belongs to the class I-like SAM-binding methyltransferase superfamily. rRNA adenine N(6)-methyltransferase family. RsmA subfamily.

It localises to the cytoplasm. Functionally, specifically dimethylates two adjacent adenosines in the loop of a conserved hairpin near the 3'-end of 16S rRNA in the 30S particle. May play a critical role in biogenesis of 30S subunits. This chain is Probable ribosomal RNA small subunit methyltransferase A, found in Thermococcus gammatolerans (strain DSM 15229 / JCM 11827 / EJ3).